Here is a 154-residue protein sequence, read N- to C-terminus: Pro-corazonin (154 aa).

The N-terminal stretch at 1-19 (MLRLLLLPLFLFTLSMCMG) is a signal peptide. Position 20 is a pyrrolidone carboxylic acid (Gln-20). Asn-30 carries the asparagine amide modification. A propeptide spanning residues 70–154 (LERCLSQLQR…SAEPNVFGKH (85 aa)) is cleaved from the precursor.

Belongs to the corazonin family. As to expression, expression is restricted to 24 neurons in the larval CNS (8 in the brain and 16 in the ventral nerve cord) and 12-16 neurons in the pars lateralis of the adult brain.

It localises to the secreted. Its function is as follows. Cardioactive peptide. Corazonin is probably involved in the physiological regulation of the heart beat. Clock (Clk) and cycle (cyc) proteins negatively regulate Crz transcription in a cell-specific manner. The protein is Pro-corazonin (Crz) of Drosophila erecta (Fruit fly).